The following is a 51-amino-acid chain: Gene 62 protein (51 aa).

The chain is Gene 62 protein (62) from Mycobacterium (Mycobacteriophage L5).